Here is a 200-residue protein sequence, read N- to C-terminus: Potassium-transporting ATPase KdpC subunit (200 aa).

A helical transmembrane segment spans residues 13-33 (ITLIFWLITAIIYPLAILVVG).

This sequence belongs to the KdpC family. As to quaternary structure, the system is composed of three essential subunits: KdpA, KdpB and KdpC.

The protein resides in the cell membrane. Part of the high-affinity ATP-driven potassium transport (or Kdp) system, which catalyzes the hydrolysis of ATP coupled with the electrogenic transport of potassium into the cytoplasm. This subunit acts as a catalytic chaperone that increases the ATP-binding affinity of the ATP-hydrolyzing subunit KdpB by the formation of a transient KdpB/KdpC/ATP ternary complex. The chain is Potassium-transporting ATPase KdpC subunit from Anabaena sp. (strain L31).